The following is a 363-amino-acid chain: NADH-quinone oxidoreductase subunit H (363 aa).

10 consecutive transmembrane segments (helical) span residues 29 to 49 (VLKI…YVVW), 62 to 82 (GPMY…KLLF), 94 to 114 (AIFV…WAVV), 127 to 147 (VGLL…ILAG), 166 to 186 (VVSY…AAGS), 202 to 222 (FFDW…VSGV), 239 to 257 (IVAG…LFFL), 264 to 286 (ILVS…QGWV), 293 to 313 (LIDW…LFFA), and 339 to 359 (FIPL…SGVI).

Belongs to the complex I subunit 1 family. As to quaternary structure, NDH-1 is composed of 14 different subunits. Subunits NuoA, H, J, K, L, M, N constitute the membrane sector of the complex.

The protein localises to the cell inner membrane. The catalysed reaction is a quinone + NADH + 5 H(+)(in) = a quinol + NAD(+) + 4 H(+)(out). Functionally, NDH-1 shuttles electrons from NADH, via FMN and iron-sulfur (Fe-S) centers, to quinones in the respiratory chain. The immediate electron acceptor for the enzyme in this species is believed to be ubiquinone. Couples the redox reaction to proton translocation (for every two electrons transferred, four hydrogen ions are translocated across the cytoplasmic membrane), and thus conserves the redox energy in a proton gradient. This subunit may bind ubiquinone. This Xylella fastidiosa (strain Temecula1 / ATCC 700964) protein is NADH-quinone oxidoreductase subunit H.